Consider the following 265-residue polypeptide: Palmitoyltransferase ZDHHC21 (265 aa).

Topologically, residues 1 to 16 are cytoplasmic; the sequence is MGLRIHFVVDPHGWCC. The chain crosses the membrane as a helical span at residues 17-37; sequence MGLIVFVWLYNIVIIPKIVLF. The Extracellular portion of the chain corresponds to 38 to 44; it reads PHYEEGH. Residues 45 to 65 traverse the membrane as a helical segment; it reads IPGILIIIFYGISIFCLVALV. Over 66–133 the chain is Cytoplasmic; the sequence is RASLTDPGRL…NNCVGEDNHW (68 aa). The DHHC domain occupies 90-140; that stretch reads ELCNKCNLMRPKRSHHCSRCGHCVRRMDHHCPWINNCVGEDNHWLFLQLCF. Cysteine 120 acts as the S-palmitoyl cysteine intermediate in catalysis. A helical membrane pass occupies residues 134–154; it reads LFLQLCFYTELLTCYALMFSF. The Extracellular portion of the chain corresponds to 155 to 185; the sequence is CHYYYFLPLKKRNLDLFVVRHELAIMRLAAF. The chain crosses the membrane as a helical span at residues 186–206; it reads MGITMLVGITGLFYTQLIGII. Topologically, residues 207–265 are cytoplasmic; the sequence is TDTTSIEKMSNCCEEISRPRKPWQQTFSEVFGTRWKILWFIPFRQRQPLRVPYHFANHV.

The protein belongs to the DHHC palmitoyltransferase family. Widely expressed. Expressed in Henle's layer within the hair bulb and the hair shaft cuticle (at protein level). Expression is limited to the post-mitotic lineages of inner root sheath (IRS) and cuticle.

It localises to the golgi apparatus membrane. The protein resides in the golgi apparatus. It is found in the cis-Golgi network membrane. Its subcellular location is the cell membrane. The catalysed reaction is L-cysteinyl-[protein] + hexadecanoyl-CoA = S-hexadecanoyl-L-cysteinyl-[protein] + CoA. In terms of biological role, palmitoyltransferase that catalyzes the addition of palmitate onto various protein substrates. Palmitoylates sex steroid hormone receptors, including ESR1, PGR and AR, thereby regulating their targeting to the plasma membrane. This affects rapid intracellular signaling by sex hormones via ERK and AKT kinases and the generation of cAMP, but does not affect that mediated by their nuclear receptor. Palmitoylates FYN, regulates its localization in hair follicles and plays a key role in epidermal homeostasis and hair follicle differentiation. Through the palmitoylation of PLCB1 and the regulation of PLCB1 downstream signaling may indirectly regulate the function of the endothelial barrier and the adhesion of leukocytes to the endothelium. Also has a palmitoyltransferase activity toward ADRA1D, positively regulating its activity and expression and may thereby play a role in vascular contraction. May also palmitoylate eNOS and LCK. This Mus musculus (Mouse) protein is Palmitoyltransferase ZDHHC21.